Reading from the N-terminus, the 302-residue chain is 4-diphosphocytidyl-2-C-methyl-D-erythritol kinase (302 aa).

K11 is an active-site residue. Residue 93–103 (PVASGLAGGST) coordinates ATP. D135 is an active-site residue.

Belongs to the GHMP kinase family. IspE subfamily.

It catalyses the reaction 4-CDP-2-C-methyl-D-erythritol + ATP = 4-CDP-2-C-methyl-D-erythritol 2-phosphate + ADP + H(+). It participates in isoprenoid biosynthesis; isopentenyl diphosphate biosynthesis via DXP pathway; isopentenyl diphosphate from 1-deoxy-D-xylulose 5-phosphate: step 3/6. Catalyzes the phosphorylation of the position 2 hydroxy group of 4-diphosphocytidyl-2C-methyl-D-erythritol. The sequence is that of 4-diphosphocytidyl-2-C-methyl-D-erythritol kinase from Gloeobacter violaceus (strain ATCC 29082 / PCC 7421).